Here is a 303-residue protein sequence, read N- to C-terminus: Cilia- and flagella-associated protein 161 (303 aa).

Microtubule inner protein component of sperm flagellar doublet microtubules.

It is found in the cytoplasm. Its subcellular location is the cytoskeleton. The protein resides in the cilium axoneme. It localises to the flagellum axoneme. Functionally, microtubule inner protein (MIP) part of the dynein-decorated doublet microtubules (DMTs) in cilia axoneme, which is required for motile cilia beating. This is Cilia- and flagella-associated protein 161 from Mus musculus (Mouse).